The chain runs to 330 residues: Beta-ketoacyl-[acyl-carrier-protein] synthase III (330 aa).

Active-site residues include C114 and H255. The interval 256–260 (QANQR) is ACP-binding. Residue N285 is part of the active site.

The protein belongs to the thiolase-like superfamily. FabH family. As to quaternary structure, homodimer.

The protein resides in the cytoplasm. It catalyses the reaction malonyl-[ACP] + acetyl-CoA + H(+) = 3-oxobutanoyl-[ACP] + CO2 + CoA. Its pathway is lipid metabolism; fatty acid biosynthesis. Its function is as follows. Catalyzes the condensation reaction of fatty acid synthesis by the addition to an acyl acceptor of two carbons from malonyl-ACP. Catalyzes the first condensation reaction which initiates fatty acid synthesis and may therefore play a role in governing the total rate of fatty acid production. Possesses both acetoacetyl-ACP synthase and acetyl transacylase activities. Its substrate specificity determines the biosynthesis of branched-chain and/or straight-chain of fatty acids. The chain is Beta-ketoacyl-[acyl-carrier-protein] synthase III from Trichormus variabilis (strain ATCC 29413 / PCC 7937) (Anabaena variabilis).